The primary structure comprises 611 residues: Dihydroxy-acid dehydratase (611 aa).

Aspartate 81 contributes to the Mg(2+) binding site. Cysteine 122 serves as a coordination point for [2Fe-2S] cluster. Mg(2+) is bound by residues aspartate 123 and lysine 124. Lysine 124 is modified (N6-carboxylysine). Cysteine 195 serves as a coordination point for [2Fe-2S] cluster. A Mg(2+)-binding site is contributed by glutamate 491. The active-site Proton acceptor is the serine 517.

It belongs to the IlvD/Edd family. As to quaternary structure, homodimer. It depends on [2Fe-2S] cluster as a cofactor. Requires Mg(2+) as cofactor.

It carries out the reaction (2R)-2,3-dihydroxy-3-methylbutanoate = 3-methyl-2-oxobutanoate + H2O. It catalyses the reaction (2R,3R)-2,3-dihydroxy-3-methylpentanoate = (S)-3-methyl-2-oxopentanoate + H2O. It participates in amino-acid biosynthesis; L-isoleucine biosynthesis; L-isoleucine from 2-oxobutanoate: step 3/4. The protein operates within amino-acid biosynthesis; L-valine biosynthesis; L-valine from pyruvate: step 3/4. Its function is as follows. Functions in the biosynthesis of branched-chain amino acids. Catalyzes the dehydration of (2R,3R)-2,3-dihydroxy-3-methylpentanoate (2,3-dihydroxy-3-methylvalerate) into 2-oxo-3-methylpentanoate (2-oxo-3-methylvalerate) and of (2R)-2,3-dihydroxy-3-methylbutanoate (2,3-dihydroxyisovalerate) into 2-oxo-3-methylbutanoate (2-oxoisovalerate), the penultimate precursor to L-isoleucine and L-valine, respectively. The sequence is that of Dihydroxy-acid dehydratase from Histophilus somni (strain 129Pt) (Haemophilus somnus).